Consider the following 121-residue polypeptide: Small ribosomal subunit protein bS16 (121 aa).

The interval 80-121 is disordered; that stretch reads AGVREKTERNNPNKAKPGKKAQERAEEKAAKAAEAAEAADAE. 2 stretches are compositionally biased toward basic and acidic residues: residues 81-90 and 99-110; these read GVREKTERNN and KAQERAEEKAAK.

It belongs to the bacterial ribosomal protein bS16 family.

This chain is Small ribosomal subunit protein bS16, found in Ruegeria sp. (strain TM1040) (Silicibacter sp.).